Consider the following 179-residue polypeptide: Large ribosomal subunit protein uL6 (179 aa).

This sequence belongs to the universal ribosomal protein uL6 family. In terms of assembly, part of the 50S ribosomal subunit.

Its function is as follows. This protein binds to the 23S rRNA, and is important in its secondary structure. It is located near the subunit interface in the base of the L7/L12 stalk, and near the tRNA binding site of the peptidyltransferase center. This is Large ribosomal subunit protein uL6 from Metamycoplasma arthritidis (strain 158L3-1) (Mycoplasma arthritidis).